We begin with the raw amino-acid sequence, 232 residues long: Large ribosomal subunit protein uL1 (232 aa).

It belongs to the universal ribosomal protein uL1 family. In terms of assembly, part of the 50S ribosomal subunit.

Functionally, binds directly to 23S rRNA. The L1 stalk is quite mobile in the ribosome, and is involved in E site tRNA release. Protein L1 is also a translational repressor protein, it controls the translation of the L11 operon by binding to its mRNA. The chain is Large ribosomal subunit protein uL1 from Stenotrophomonas maltophilia (strain K279a).